An 883-amino-acid chain; its full sequence is MSSTPKQTTGDALAGHTPMMQQYLRLKAEAGPLLLFYRMGDFYEMFYEDAERAARLLNLTLTKRGNSNGTPIPMAGIPVHAMEQYLARLVALGESVAICEQIGDPAAAKGPVERRIVRIVTPGTLTDEALLPAKADRALAAVCVTGKREPRAGLAWLNLASGAFHVTECAPAQLESELHRIAPAELIQAESAELHMAFEGARTRVPDWHFEADGARAQLLAHFKTDSLGGFDVEDMPAAVCAAGALLRYAARTQSQALAHVQTIAAERSGQYVLLDPVTRRNLELTQTLSGEESPTLFSLLDGCRTPMGSRLLRRWLHHPLRENEPVLARQHAIATMLTARQEGEQTFAAAGLLETLRDALNAFPDIERIAARVALRSVRPRELASLRDALAALPALHASLTPLSGSPRARELAAQLAMPPDIGELLARAVASEPAVAIRDGGVIAAGFDSELDELRALATDGGDFLVQLEARERERTGIGNLRVEFNRVHGFYIEVTKGQTDKVPEDYRRRQTLKNAERYITPELKTWEDRVLSAQDRSLAREKWLYEQLLDALAQYVRPLSQCASALAELDTLAALAEHARRHDWVAPELIDGAEIDIEAGRHPVVERAIERFTPNGCRLDQTRRMLLITGPNMGGKSTYMRQVALIALLARTGSFVPATRARVGRLDRIFTRIGAADDLAGGRSTFMMEMTEAAAILAASTPASLVLMDEIGRGTSTYDGLALAWAIAYRLLTHNRALTLFATHYFELTRLPAEQPTAANVHLAAAESAGGIVFLHEVREGPASRSYGIQVAQRAGVPAAVIRQASRELERLEAQGAPTPQLGLFAAALDADVQSQAMTEQAEDAAALAQLRDQLVAIDPDSLTPREALDALYRLKQHLT.

633–640 (GPNMGGKS) contributes to the ATP binding site.

This sequence belongs to the DNA mismatch repair MutS family.

Its function is as follows. This protein is involved in the repair of mismatches in DNA. It is possible that it carries out the mismatch recognition step. This protein has a weak ATPase activity. In Bordetella pertussis (strain Tohama I / ATCC BAA-589 / NCTC 13251), this protein is DNA mismatch repair protein MutS.